The primary structure comprises 353 residues: MTAILEKTEVQSLWARFAAWIVSTENRLYIGWFGVLMIPCLLTATSVFIIAFVAAPPVDIDGIREPVSGSLLYGNNIISGAVVPTSNAIGLHFYPIWEAATVDEWLYNGGPYQLVVCHFFIGICCYMGREWELSYRLGMRPWIAVAYSAPVAAATAVFIIYPIGQGSFSDGMPLGISGTFNFMIVFQAEHNILMHPFHMLGVAGVFGGSLFSAMHGSLVTSSLIRETTEAVSTNAGYRFGQEEETYNILAAHGYFGRLIFQYASFNNSRSLHFFLAIWPVVGIWFTALGLSTMAFNLNGLNFNQSIVDSQGRVVNTWADIINRANLGMEVMHERNAHNFPLDLASVEAPSING.

At Thr2 the chain carries N-acetylthreonine. Thr2 bears the Phosphothreonine mark. 3 helical membrane passes run Tyr29–Ser46, His118–Leu133, and Trp142–Ala156. His118 is a chlorophyll a binding site. Tyr126 lines the pheophytin a pocket. Residues Asp170 and Glu189 each contribute to the [CaMn4O5] cluster site. Residues Phe197 to Leu218 traverse the membrane as a helical segment. His198 contacts chlorophyll a. Residues His215 and Ser264–Phe265 contribute to the a quinone site. Fe cation is bound at residue His215. A Fe cation-binding site is contributed by His272. The chain crosses the membrane as a helical span at residues Phe274–Leu288. Positions 332, 333, 342, and 344 each coordinate [CaMn4O5] cluster. A propeptide spanning residues Ser345–Gly353 is cleaved from the precursor.

Belongs to the reaction center PufL/M/PsbA/D family. In terms of assembly, PSII is composed of 1 copy each of membrane proteins PsbA, PsbB, PsbC, PsbD, PsbE, PsbF, PsbH, PsbI, PsbJ, PsbK, PsbL, PsbM, PsbT, PsbX, PsbY, PsbZ, Psb30/Ycf12, at least 3 peripheral proteins of the oxygen-evolving complex and a large number of cofactors. It forms dimeric complexes. The cofactor is The D1/D2 heterodimer binds P680, chlorophylls that are the primary electron donor of PSII, and subsequent electron acceptors. It shares a non-heme iron and each subunit binds pheophytin, quinone, additional chlorophylls, carotenoids and lipids. D1 provides most of the ligands for the Mn4-Ca-O5 cluster of the oxygen-evolving complex (OEC). There is also a Cl(-1) ion associated with D1 and D2, which is required for oxygen evolution. The PSII complex binds additional chlorophylls, carotenoids and specific lipids.. Post-translationally, tyr-161 forms a radical intermediate that is referred to as redox-active TyrZ, YZ or Y-Z. In terms of processing, C-terminally processed by CTPA; processing is essential to allow assembly of the oxygen-evolving complex and thus photosynthetic growth.

The protein resides in the plastid. The protein localises to the chloroplast thylakoid membrane. It carries out the reaction 2 a plastoquinone + 4 hnu + 2 H2O = 2 a plastoquinol + O2. Functionally, photosystem II (PSII) is a light-driven water:plastoquinone oxidoreductase that uses light energy to abstract electrons from H(2)O, generating O(2) and a proton gradient subsequently used for ATP formation. It consists of a core antenna complex that captures photons, and an electron transfer chain that converts photonic excitation into a charge separation. The D1/D2 (PsbA/PsbD) reaction center heterodimer binds P680, the primary electron donor of PSII as well as several subsequent electron acceptors. This chain is Photosystem II protein D1, found in Stigeoclonium helveticum (Green alga).